The primary structure comprises 344 residues: Dihydroorotase (344 aa).

Zn(2+) contacts are provided by His-13 and His-15. Residues 15–17 (HLR) and Asn-41 contribute to the substrate site. Lys-98, His-135, and His-173 together coordinate Zn(2+). Position 98 is an N6-carboxylysine (Lys-98). Residue His-135 coordinates substrate. Position 218 (Leu-218) interacts with substrate. Asp-247 lines the Zn(2+) pocket. Asp-247 is a catalytic residue. Substrate is bound by residues His-251 and Ala-263.

The protein belongs to the metallo-dependent hydrolases superfamily. DHOase family. Class II DHOase subfamily. In terms of assembly, homodimer. Requires Zn(2+) as cofactor.

The catalysed reaction is (S)-dihydroorotate + H2O = N-carbamoyl-L-aspartate + H(+). Its pathway is pyrimidine metabolism; UMP biosynthesis via de novo pathway; (S)-dihydroorotate from bicarbonate: step 3/3. Functionally, catalyzes the reversible cyclization of carbamoyl aspartate to dihydroorotate. This is Dihydroorotase from Neisseria meningitidis serogroup C (strain 053442).